A 540-amino-acid polypeptide reads, in one-letter code: Membrane protein insertase YidC (540 aa).

The helical transmembrane segment at 6–26 (NILLIALALVSFLLFQQWQVA) threads the bilayer. A disordered region spans residues 36–63 (QAQSSSTLPAPSFADELDPVPGQQQASA). Helical transmembrane passes span 342 to 362 (AFIQ…TFIV), 417 to 437 (LGGC…YWAL), 455 to 475 (LSAQ…MFLI), and 496 to 516 (PVMF…YWLV).

This sequence belongs to the OXA1/ALB3/YidC family. Type 1 subfamily. In terms of assembly, interacts with the Sec translocase complex via SecD. Specifically interacts with transmembrane segments of nascent integral membrane proteins during membrane integration.

It localises to the cell inner membrane. Required for the insertion and/or proper folding and/or complex formation of integral membrane proteins into the membrane. Involved in integration of membrane proteins that insert both dependently and independently of the Sec translocase complex, as well as at least some lipoproteins. Aids folding of multispanning membrane proteins. In Vibrio campbellii (strain ATCC BAA-1116), this protein is Membrane protein insertase YidC.